An 860-amino-acid polypeptide reads, in one-letter code: Leucine--tRNA ligase (860 aa).

The short motif at 42 to 52 is the 'HIGH' region element; the sequence is PYPSGRLHMGH. The short motif at 619–623 is the 'KMSKS' region element; the sequence is KMSKS. Lysine 622 contacts ATP.

This sequence belongs to the class-I aminoacyl-tRNA synthetase family.

Its subcellular location is the cytoplasm. It carries out the reaction tRNA(Leu) + L-leucine + ATP = L-leucyl-tRNA(Leu) + AMP + diphosphate. The chain is Leucine--tRNA ligase from Shigella sonnei (strain Ss046).